The following is a 75-amino-acid chain: DNA-directed RNA polymerase subunit Rpo5 (75 aa).

The protein belongs to the archaeal Rpo5/eukaryotic RPB5 RNA polymerase subunit family. As to quaternary structure, part of the RNA polymerase complex.

The protein localises to the cytoplasm. The catalysed reaction is RNA(n) + a ribonucleoside 5'-triphosphate = RNA(n+1) + diphosphate. Functionally, DNA-dependent RNA polymerase (RNAP) catalyzes the transcription of DNA into RNA using the four ribonucleoside triphosphates as substrates. This is DNA-directed RNA polymerase subunit Rpo5 from Halobacterium salinarum (strain ATCC 700922 / JCM 11081 / NRC-1) (Halobacterium halobium).